Consider the following 417-residue polypeptide: Dibenzothiophene monooxygenase (417 aa).

The segment at 18–124 (NDPVAVARGL…HLYTQIAQNN (107 aa)) is helical N-terminus. FMN is bound by residues tyrosine 96, 129 to 134 (NASSEN), 159 to 163 (KHFCS), arginine 282, 369 to 370 (AR), and histidine 391. Residues 125–233 (WWTGNASSEN…KVEPDEVLGA (109 aa)) are central beta-barrel N-terminus. Residues 131 to 142 (SSENNSHVLDWK) are lid loop. The interval 234-417 (PNAFVLAFIQ…GQYPIPGFTS (184 aa)) is helical C-terminus.

Belongs to the DszC flavin monooxygenase family. As to quaternary structure, homotetramer formed by a dimer of dimers; FMN binds between monomers of the homodimer.

It localises to the cytoplasm. The catalysed reaction is dibenzothiophene + 2 FMNH2 + 2 O2 = dibenzothiophene 5,5-dioxide + 2 FMN + 2 H2O + 2 H(+). It catalyses the reaction dibenzothiophene + FMNH2 + O2 = dibenzothiophene 5-oxide + FMN + H2O + H(+). The enzyme catalyses dibenzothiophene 5-oxide + FMNH2 + O2 = dibenzothiophene 5,5-dioxide + FMN + H2O + H(+). It participates in sulfur metabolism; dibenzothiophene degradation. Its activity is regulated as follows. DBT degradation completely inhibited by Cu(2+), Mn(2+), p-chloromercuribenzoic acid, 2,2-bipyridyl, 1,10-phenanthroline, and strongly inhibited by Zn(2+), 5,5'- Dithiobis(2-nitrobenzoic acid) and 8-quinolinol. Catalyzes the first step of the '4S' desulfurization pathway that removes covalently bound sulfur from dibenzothiophene (DBT) without breaking carbon-carbon bonds. Sulfur dioxygenase which converts DBT to DBT-sulfone (DBTO2 or DBT 5,5-dioxide) in a stepwise manner. Also acts on thioxanthen-9-one and 4,6-dimethyl DBT and 2,8-dimethyl DBT. The protein is Dibenzothiophene monooxygenase of Rhodococcus erythropolis (Arthrobacter picolinophilus).